A 422-amino-acid polypeptide reads, in one-letter code: Enolase (422 aa).

Q162 serves as a coordination point for (2R)-2-phosphoglycerate. Residue E204 is the Proton donor of the active site. Mg(2+) is bound by residues D241, E284, and D311. The (2R)-2-phosphoglycerate site is built by K336, R365, S366, and K387. Residue K336 is the Proton acceptor of the active site.

The protein belongs to the enolase family. The cofactor is Mg(2+).

The protein resides in the cytoplasm. It localises to the secreted. The protein localises to the cell surface. The enzyme catalyses (2R)-2-phosphoglycerate = phosphoenolpyruvate + H2O. The protein operates within carbohydrate degradation; glycolysis; pyruvate from D-glyceraldehyde 3-phosphate: step 4/5. In terms of biological role, catalyzes the reversible conversion of 2-phosphoglycerate (2-PG) into phosphoenolpyruvate (PEP). It is essential for the degradation of carbohydrates via glycolysis. This is Enolase from Bartonella quintana (strain Toulouse) (Rochalimaea quintana).